Here is a 356-residue protein sequence, read N- to C-terminus: DNA polymerase IV (356 aa).

The 182-residue stretch at 6–187 folds into the UmuC domain; sequence IIHVDMDYFF…LDIGDFPGVG (182 aa). Mg(2+) contacts are provided by aspartate 10 and aspartate 105. Glutamate 106 is an active-site residue.

The protein belongs to the DNA polymerase type-Y family. Monomer. It depends on Mg(2+) as a cofactor.

Its subcellular location is the cytoplasm. The enzyme catalyses DNA(n) + a 2'-deoxyribonucleoside 5'-triphosphate = DNA(n+1) + diphosphate. Its function is as follows. Poorly processive, error-prone DNA polymerase involved in untargeted mutagenesis. Copies undamaged DNA at stalled replication forks, which arise in vivo from mismatched or misaligned primer ends. These misaligned primers can be extended by PolIV. Exhibits no 3'-5' exonuclease (proofreading) activity. May be involved in translesional synthesis, in conjunction with the beta clamp from PolIII. The polypeptide is DNA polymerase IV (Staphylococcus saprophyticus subsp. saprophyticus (strain ATCC 15305 / DSM 20229 / NCIMB 8711 / NCTC 7292 / S-41)).